Reading from the N-terminus, the 2629-residue chain is Telomerase protein component 1 (2629 aa).

TEP1 N-terminal repeat units lie at residues 1–30 (MEKL…DIQP), 31–60 (LEKI…DLQP), 61–90 (MEKI…DLQS), and 91–120 (LEKL…TVKR). Residues 231–689 (LKLTSGDSDS…VKHNLPPLPG (459 aa)) enclose the TROVE domain. A compositionally biased stretch (basic residues) spans 390 to 401 (PRKHRSKTRSRQ). The interval 390–416 (PRKHRSKTRSRQPPRPQRTKPPFSESG) is disordered. Residues 1175–1582 (RLSLVIGQAG…KFLTNLHVVA (408 aa)) form the NACHT domain. 1181–1188 (GQAGQGKT) contributes to the ATP binding site. WD repeat units lie at residues 1424–1461 (VLPQ…TKSW), 1685–1724 (PISS…EEKA), 1727–1765 (SGCD…WVFQ), 1768–1807 (AHQY…LAFQ), 1809–1848 (THPK…VTKE), 1851–1890 (GPGP…RLAA), 1893–1934 (AQCG…GCLG), 1936–1975 (LYLS…QEAQ), 1978–2016 (ELNV…LQSL), 2019–2058 (SSVC…QPHA), 2070–2109 (GHEG…APLL), 2116–2154 (CHRD…QLGQ), 2157–2194 (GHQS…LTSI), 2200–2244 (PISQ…QIHT), 2247–2285 (GHSG…DDTC), 2288–2327 (RSSA…ATAR), 2329–2365 (PGRV…GSTC), 2378–2427 (EDLG…SSIL), 2470–2510 (PNGS…GEWV), 2555–2592 (IHLG…LLGL), and 2594–2628 (RCEG…FLSW).

Associated component of the telomerase holoenzyme complex. Component of the vault ribonucleoprotein particle, at least composed of MVP, PARP4 and one or more vault RNAs (vRNAs). Binds to VAULTRC1, VAULTRC2 and VAULTRC4/hvg4 vRNAs.

The protein resides in the nucleus. It is found in the chromosome. It localises to the telomere. Component of the telomerase ribonucleoprotein complex that is essential for the replication of chromosome termini. Also a component of the ribonucleoprotein vaults particle, a multi-subunit structure involved in nucleo-cytoplasmic transport. Responsible for the localizing and stabilizing vault RNA (vRNA) association in the vault ribonucleoprotein particle. Binds to TERC. The polypeptide is Telomerase protein component 1 (Tep1) (Rattus norvegicus (Rat)).